Consider the following 311-residue polypeptide: Ribosomal RNA small subunit methyltransferase H (311 aa).

S-adenosyl-L-methionine is bound by residues 33 to 35 (AGH), aspartate 53, phenylalanine 80, aspartate 101, and glutamine 108.

Belongs to the methyltransferase superfamily. RsmH family.

The protein localises to the cytoplasm. It catalyses the reaction cytidine(1402) in 16S rRNA + S-adenosyl-L-methionine = N(4)-methylcytidine(1402) in 16S rRNA + S-adenosyl-L-homocysteine + H(+). In terms of biological role, specifically methylates the N4 position of cytidine in position 1402 (C1402) of 16S rRNA. The protein is Ribosomal RNA small subunit methyltransferase H of Alkaliphilus oremlandii (strain OhILAs) (Clostridium oremlandii (strain OhILAs)).